A 75-amino-acid polypeptide reads, in one-letter code: MNITKAYVIFFLVVILTNSLSNSDALASSVIETTKNDVCSTPCTIRYGTFECFQDCILDHFRDGNCINGRCCCKY.

Residues 1–19 (MNITKAYVIFFLVVILTNS) form the signal peptide. 4 cysteine pairs are disulfide-bonded: C39–C73, C43–C66, C52–C71, and C56–C72.

Belongs to the DEFL family.

Its subcellular location is the secreted. This is Putative defensin-like protein 55 from Arabidopsis thaliana (Mouse-ear cress).